A 119-amino-acid polypeptide reads, in one-letter code: Large ribosomal subunit protein uL18 (119 aa).

It belongs to the universal ribosomal protein uL18 family. In terms of assembly, part of the 50S ribosomal subunit; part of the 5S rRNA/L5/L18/L25 subcomplex. Contacts the 5S and 23S rRNAs.

In terms of biological role, this is one of the proteins that bind and probably mediate the attachment of the 5S RNA into the large ribosomal subunit, where it forms part of the central protuberance. The sequence is that of Large ribosomal subunit protein uL18 from Anaeromyxobacter sp. (strain Fw109-5).